A 289-amino-acid polypeptide reads, in one-letter code: Zinc finger matrin-type protein 3 (289 aa).

The disordered stretch occupies residues 1–42; that stretch reads MILLQHAVLPPPKQPSPSPPMSVATRSTGTLQLPPQKPFGQE. Residues 9–20 are compositionally biased toward pro residues; that stretch reads LPPPKQPSPSPP. The span at 24-33 shows a compositional bias: polar residues; that stretch reads ATRSTGTLQL. 2 Matrin-type zinc fingers span residues 70–100 and 147–177; these read LYCKLCNVTLNSAQQAQAHYQGKNHGKKLRN and DYCKLCDASFSSPAVAQAHYQGKNHAKRLRL. A compositionally biased stretch (polar residues) spans 180–191; the sequence is AQSNSFSESSEL. A disordered region spans residues 180–201; sequence AQSNSFSESSELGQRRARKEGN. The Matrin-type 3 zinc-finger motif lies at 246–276; it reads FYCSMCNVGAGEEMEFRQHLESKQHKSKVSE.

As to quaternary structure, interacts with dsRNA. In terms of tissue distribution, highly expressed in adult brain, and moderately in adult kidney and testis. Not detected in fetal brain, heart, pancreas, adrenal gland, liver or small intestine.

Its subcellular location is the nucleus. It is found in the nucleolus. Acts as a bona fide target gene of p53/TP53. May play a role in the TP53-dependent growth regulatory pathway. May contribute to TP53-mediated apoptosis by regulation of TP53 expression and translocation to the nucleus and nucleolus. The polypeptide is Zinc finger matrin-type protein 3 (Homo sapiens (Human)).